The chain runs to 113 residues: Large ribosomal subunit protein bL17 (113 aa).

The protein belongs to the bacterial ribosomal protein bL17 family. In terms of assembly, part of the 50S ribosomal subunit. Contacts protein L32.

This Caldicellulosiruptor saccharolyticus (strain ATCC 43494 / DSM 8903 / Tp8T 6331) protein is Large ribosomal subunit protein bL17.